Reading from the N-terminus, the 818-residue chain is Histone H2A deubiquitinase MYSM1 (818 aa).

Residues 107–158 enclose the SANT domain; that stretch reads SSPVKWTKEEKNLFEQGLATFGRRWTSIARLIGSRSVLQVKNYARHYFKNKC. Residues 344-442 enclose the SWIRM domain; it reads IKPPDQELEI…FGCEQAIYNR (99 aa). The 133-residue stretch at 548-680 folds into the MPN domain; it reads VKVSCEAMLV…PHPQSQVACL (133 aa). Zn(2+)-binding residues include histidine 627, histidine 629, and aspartate 640. Positions 627–640 match the JAMM motif motif; that stretch reads HSHPAFDPNPSIRD. The short motif at 745–749 is the LXXLL motif element; sequence LQKLL.

Belongs to the peptidase M67A family. MYSM1 subfamily.

Its subcellular location is the nucleus. Functionally, metalloprotease that specifically deubiquitinates monoubiquitinated histone H2A, a specific tag for epigenetic transcriptional repression, thereby acting as a coactivator. Preferentially deubiquitinates monoubiquitinated H2A in hyperacetylated nucleosomes. Deubiquitination of histone H2A leads to facilitate the phosphorylation and dissociation of histone H1 from the nucleosome. Acts as a coactivator by participating in the initiation and elongation steps of androgen receptor (AR)-induced gene activation. The sequence is that of Histone H2A deubiquitinase MYSM1 (mysm1) from Xenopus laevis (African clawed frog).